Reading from the N-terminus, the 398-residue chain is Flavohemoprotein (398 aa).

The Globin domain maps to Gln-9–Ala-147. Position 93 (His-93) interacts with heme b. Residues Tyr-103 and Glu-146 each act as charge relay system in the active site. A reductase region spans residues Trp-155–Pro-398. The FAD-binding FR-type domain maps to Arg-156–Asp-263. FAD contacts are provided by residues Tyr-196 and Arg-212 to Ser-215. Gly-276–Pro-281 is a binding site for NADP(+). An FAD-binding site is contributed by Pro-395–Pro-398.

It belongs to the globin family. The cofactor is FAD. Heme b is required as a cofactor.

The protein localises to the cytoplasm. The enzyme catalyses 2 nitric oxide + NADPH + 2 O2 = 2 nitrate + NADP(+) + H(+). The catalysed reaction is 2 nitric oxide + NADH + 2 O2 = 2 nitrate + NAD(+) + H(+). With respect to regulation, inhibited by imidazoles. Functionally, nitric oxide dioxygenase involved in NO detoxification in an aerobic process, termed nitric oxide dioxygenase (NOD) reaction that utilizes O(2) and NAD(P)H to convert NO to nitrate, which protects the fungus from various noxious nitrogen compounds. Therefore, plays a central role in the inducible response to nitrosative stress. Plays a role in virulence since nitric oxide is generated by macrophages of the host immune system. This is Flavohemoprotein (YHB1) from Candida albicans (strain SC5314 / ATCC MYA-2876) (Yeast).